A 347-amino-acid chain; its full sequence is UPF0284 protein LS215_0030 (347 aa).

This sequence belongs to the UPF0284 family.

The polypeptide is UPF0284 protein LS215_0030 (Saccharolobus islandicus (strain L.S.2.15 / Lassen #1) (Sulfolobus islandicus)).